Reading from the N-terminus, the 263-residue chain is Hemophilin (263 aa).

The signal sequence occupies residues 1-20; sequence MKISQLFLGLVACSTAFAYA. 4 residues coordinate heme b: H42, Y58, S104, and H105.

As to quaternary structure, monomer in solution. Interacts with host hemoglobin.

The protein localises to the secreted. Its function is as follows. Part of a high affinity heme acquisition system. Functions as a hemophore that acquires heme from human hemoglobin and delivers the heme to its cognate receptor, HphR, facilitating transport of heme across the bacterial outer membrane. Apo HphA interacts specifically with human hemoglobin and steals heme through a passive process probably due to its high affinity for heme. It can also acquire heme complexed to human serum albumin. Plays a supporting role for full virulence, acting as an accessory factor that enhances the process of heme uptake. The protein is Hemophilin of Acinetobacter baumannii.